A 197-amino-acid chain; its full sequence is Pinin homolog 1 (197 aa).

Positions 30 to 73 (LDGKVNNEDSHMEIDQPEGSMEEDDHRQVKEKNTSENSVEQKRG) are disordered. 2 stretches are compositionally biased toward basic and acidic residues: residues 34–43 (VNNEDSHMEI) and 53–71 (DDHR…VEQK).

Belongs to the pinin family.

The protein localises to the nucleus. Its subcellular location is the cytoplasm. In terms of biological role, transcriptional activator that may participate in the regulation of mRNA splicing. In Schizosaccharomyces pombe (strain 972 / ATCC 24843) (Fission yeast), this protein is Pinin homolog 1 (pnn1).